The following is a 398-amino-acid chain: 4-hydroxy-3-methylbut-2-en-1-yl diphosphate synthase (ferredoxin) (398 aa).

C306, C309, C340, and E347 together coordinate [4Fe-4S] cluster.

Belongs to the IspG family. [4Fe-4S] cluster is required as a cofactor.

The catalysed reaction is (2E)-4-hydroxy-3-methylbut-2-enyl diphosphate + 2 oxidized [2Fe-2S]-[ferredoxin] + H2O = 2-C-methyl-D-erythritol 2,4-cyclic diphosphate + 2 reduced [2Fe-2S]-[ferredoxin] + H(+). It functions in the pathway isoprenoid biosynthesis; isopentenyl diphosphate biosynthesis via DXP pathway; isopentenyl diphosphate from 1-deoxy-D-xylulose 5-phosphate: step 5/6. In terms of biological role, converts 2C-methyl-D-erythritol 2,4-cyclodiphosphate (ME-2,4cPP) into 1-hydroxy-2-methyl-2-(E)-butenyl 4-diphosphate. The protein is 4-hydroxy-3-methylbut-2-en-1-yl diphosphate synthase (ferredoxin) of Synechococcus sp. (strain CC9605).